A 525-amino-acid polypeptide reads, in one-letter code: Ubiquitin carboxyl-terminal hydrolase 22 (525 aa).

A UBP-type zinc finger spans residues 21 to 138 (PGCSHLGSFK…KEEQRKAWKM (118 aa)). Positions 23, 25, 63, 66, 76, 79, 84, 89, 93, 99, 112, and 115 each coordinate Zn(2+). Lysine 129 is subject to N6-acetyllysine. A Phosphothreonine modification is found at threonine 147. The region spanning 176–520 (RGLINLGNTC…EGYLLFYHKQ (345 aa)) is the USP domain. The Nucleophile role is filled by cysteine 185. Serine 237 carries the phosphoserine modification. Histidine 479 serves as the catalytic Proton acceptor.

Belongs to the peptidase C19 family. UBP8 subfamily. As to quaternary structure, component of some SAGA transcription coactivator-HAT complexes, at least composed of ATXN7, ATXN7L3, ENY2, GCN5L2, SUPT3H, TAF10, TRRAP and USP22. Within the SAGA complex, ATXN7L3, ENY2 and USP22 form a subcomplex required for histone deubiquitination. Interacts directly with ATXN7L3; leading to its recruitment to the SAGA complex. Interacts with ATXN7L3 and weakly with ATXN7L3B. Interacts with MED1. Post-translationally, phosphorylated in G2/M phase, but not in G1 phase by CDK1. In terms of processing, ubiquitinated and subsequently degraded in a CDC20-dependent manner. In terms of tissue distribution, highly expressed in brain and weakly in other organs.

It is found in the nucleus. The protein resides in the cytoplasm. It carries out the reaction Thiol-dependent hydrolysis of ester, thioester, amide, peptide and isopeptide bonds formed by the C-terminal Gly of ubiquitin (a 76-residue protein attached to proteins as an intracellular targeting signal).. Deubiquitinase that plays a role in several cellular processes including transcriptional regulation, cell cycle progression or innate immunity. As part of the transcription regulatory histone acetylation (HAT) complex SAGA, catalyzes the deubiquitination of both histones H2A and H2B, thereby acting as a transcriptional coactivator. Recruited to specific gene promoters by activators such as MYC, where it is required for transcription. Facilitates cell-cycle progression by stabilizing CCNB1 and antagonizing its proteasome-mediated degradation in a cell cycle-specific manner. Modulates cell cycle progression and apoptosis also by antagonizing TP53 transcriptional activation through deacetylase SIRT1 stabilization. Plays multiple roles in immunity and inflammation. Participates in antiviral response by deubiquitinating the importin KPNA2, leading to IRF3 nuclear translocation and subsequent type I interferon production. Acts as a central regulator of type III IFN signaling by negatively regulating STING1 activation and ubiquitination. Inhibits NLRP3 inflammasome activation by promoting NLRP3 degradation through ATG5-dependent autophagy. Deubiquitinates CD274 to induce its stabilization and thereby participates in maintenance of immune tolerance to self. Controls necroptotic cell death by regulating RIPK3 phosphorylation and ubiquitination. During bacterial infection, promotes pro-inflammatory response by targeting TRAF6 and removing its 'Lys-48'-linked polyubiquitination. The protein is Ubiquitin carboxyl-terminal hydrolase 22 (Usp22) of Mus musculus (Mouse).